The following is a 224-amino-acid chain: Protein GrpE (224 aa).

2 stretches are compositionally biased toward polar residues: residues 1-16 (MSGD…NVES) and 209-224 (ESSS…EGDA). Disordered regions lie at residues 1–35 (MSGD…DPVV) and 203–224 (SMGP…EGDA).

It belongs to the GrpE family. As to quaternary structure, homodimer.

The protein resides in the cytoplasm. Participates actively in the response to hyperosmotic and heat shock by preventing the aggregation of stress-denatured proteins, in association with DnaK and GrpE. It is the nucleotide exchange factor for DnaK and may function as a thermosensor. Unfolded proteins bind initially to DnaJ; upon interaction with the DnaJ-bound protein, DnaK hydrolyzes its bound ATP, resulting in the formation of a stable complex. GrpE releases ADP from DnaK; ATP binding to DnaK triggers the release of the substrate protein, thus completing the reaction cycle. Several rounds of ATP-dependent interactions between DnaJ, DnaK and GrpE are required for fully efficient folding. This Synechococcus sp. (strain CC9902) protein is Protein GrpE.